Here is a 350-residue protein sequence, read N- to C-terminus: Protein RecA (350 aa).

An ATP-binding site is contributed by Gly-68–Thr-75.

The protein belongs to the RecA family.

It is found in the cytoplasm. Its function is as follows. Can catalyze the hydrolysis of ATP in the presence of single-stranded DNA, the ATP-dependent uptake of single-stranded DNA by duplex DNA, and the ATP-dependent hybridization of homologous single-stranded DNAs. It interacts with LexA causing its activation and leading to its autocatalytic cleavage. The sequence is that of Protein RecA from Symbiobacterium thermophilum (strain DSM 24528 / JCM 14929 / IAM 14863 / T).